A 452-amino-acid polypeptide reads, in one-letter code: uncharacterized protein (452 aa).

72 to 79 (GPPGSGKT) is a binding site for ATP.

The protein belongs to the AAA ATPase family. RarA/MGS1/WRNIP1 subfamily.

This is an uncharacterized protein from Mycobacterium tuberculosis (strain ATCC 25618 / H37Rv).